The primary structure comprises 293 residues: Acetylglutamate kinase (293 aa).

Substrate is bound by residues 67–68 (GG), arginine 89, and asparagine 190.

The protein belongs to the acetylglutamate kinase family. ArgB subfamily.

It localises to the cytoplasm. It carries out the reaction N-acetyl-L-glutamate + ATP = N-acetyl-L-glutamyl 5-phosphate + ADP. It functions in the pathway amino-acid biosynthesis; L-arginine biosynthesis; N(2)-acetyl-L-ornithine from L-glutamate: step 2/4. Its function is as follows. Catalyzes the ATP-dependent phosphorylation of N-acetyl-L-glutamate. The sequence is that of Acetylglutamate kinase from Nitrosospira multiformis (strain ATCC 25196 / NCIMB 11849 / C 71).